A 286-amino-acid chain; its full sequence is 4-hydroxybenzoate octaprenyltransferase (286 aa).

The next 7 membrane-spanning stretches (helical) occupy residues 21–40, 95–115, 142–162, 167–187, 211–231, 235–255, and 266–286; these read GTLLLMWPCLMALMLAAGGM, ILFVVLGLSAFGLVLLLNGLV, FLGVVWSWSIPMAYAAQTGEV, WWLFAANWFWTVAYDTMYAMV, IIGLFQIAALVCFIAAGWSAE, LYGLGLLTFVGFSTYQQMLIF, and FLNNNWAGLALFVGLGADYLI.

The protein belongs to the UbiA prenyltransferase family. The cofactor is Mg(2+).

It localises to the cell inner membrane. It carries out the reaction all-trans-octaprenyl diphosphate + 4-hydroxybenzoate = 4-hydroxy-3-(all-trans-octaprenyl)benzoate + diphosphate. It participates in cofactor biosynthesis; ubiquinone biosynthesis. In terms of biological role, catalyzes the prenylation of para-hydroxybenzoate (PHB) with an all-trans polyprenyl group. Mediates the second step in the final reaction sequence of ubiquinone-8 (UQ-8) biosynthesis, which is the condensation of the polyisoprenoid side chain with PHB, generating the first membrane-bound Q intermediate 3-octaprenyl-4-hydroxybenzoate. The protein is 4-hydroxybenzoate octaprenyltransferase of Shewanella putrefaciens (strain CN-32 / ATCC BAA-453).